Here is a 759-residue protein sequence, read N- to C-terminus: Protein AKNAD1 (759 aa).

The segment at 169-246 (TDQLNPKKDG…HTEKASSGNR (78 aa)) is disordered. Residues 181–192 (SNKPGSPTMTEE) show a composition bias toward polar residues. A coiled-coil region spans residues 371–482 (QKISQGKQMC…EDVKDKVDES (112 aa)). The segment covering 484–496 (YTSAPSLPVSSPV) has biased composition (polar residues). Disordered regions lie at residues 484-543 (YTSA…QEAP), 634-654 (EKAP…FCSD), 678-723 (CRKE…PSLA), and 735-759 (PDTS…MKSQ). A compositionally biased stretch (low complexity) spans 497 to 509 (TLDDLASTSSSLS). The span at 639–654 (SDSTPNSDTGHSFCSD) shows a compositional bias: polar residues. Basic and acidic residues predominate over residues 679–688 (RKEPPKEFHY). Positions 735–744 (PDTSKSSPTP) are enriched in polar residues.

It belongs to the AKNA family.

In Macaca fascicularis (Crab-eating macaque), this protein is Protein AKNAD1 (AKNAD1).